A 55-amino-acid chain; its full sequence is Large ribosomal subunit protein bL33A (55 aa).

This sequence belongs to the bacterial ribosomal protein bL33 family.

This is Large ribosomal subunit protein bL33A from Salinispora tropica (strain ATCC BAA-916 / DSM 44818 / JCM 13857 / NBRC 105044 / CNB-440).